The following is a 267-amino-acid chain: Cyclin-C (267 aa).

A Cyclin N-terminal domain is found at isoleucine 48 to isoleucine 151.

The protein belongs to the cyclin family. Cyclin C subfamily. In terms of assembly, component of the Cdk8 module of the Mediator complex, composed of CycC, Cdk8, kto and skd.

The protein resides in the nucleus. In terms of biological role, component of the Mediator complex, a coactivator involved in regulated gene transcription of nearly all RNA polymerase II-dependent genes. Mediator functions as a bridge to convey information from gene-specific regulatory proteins to the basal RNA polymerase II transcription machinery. Mediator is recruited to promoters by direct interactions with regulatory proteins and serves as a scaffold for the assembly of a functional preinitiation complex with RNA polymerase II and the general transcription factors. Binds to and activates cyclin-dependent kinase Cdk8 that phosphorylates the CTD (C-terminal domain) of the large subunit of RNA polymerase II (RNAp II), which may inhibit the formation of a transcription initiation complex. Required for leg and eye development and macrochaete specification or differentiation. The protein is Cyclin-C (CycC) of Drosophila melanogaster (Fruit fly).